Here is a 750-residue protein sequence, read N- to C-terminus: Neprilysin (750 aa).

Polar residues predominate over residues 1 to 14 (MGRSESQMDITDIN). The interval 1–20 (MGRSESQMDITDINTPKPKK) is disordered. Gly-2 is lipidated: N-myristoyl glycine. Over 2–28 (GRSESQMDITDINTPKPKKKQRWTPLE) the chain is Cytoplasmic. Phosphoserine is present on residues Ser-4 and Ser-6. Residues 16-23 (PKPKKKQR) carry the Stop-transfer sequence motif. A helical; Signal-anchor for type II membrane protein membrane pass occupies residues 29-51 (ISLSVLVLLLTVIAVTMIALYAT). Topologically, residues 52–750 (YDDGICKSSD…MNPEKKCRVW (699 aa)) are extracellular. The Peptidase M13 domain occupies 56-750 (ICKSSDCIKS…MNPEKKCRVW (695 aa)). 6 disulfide bridges follow: Cys-57-Cys-62, Cys-80-Cys-735, Cys-88-Cys-695, Cys-143-Cys-411, Cys-234-Cys-242, and Cys-621-Cys-747. Arg-103 is an a peptide binding site. Asn-145 carries an N-linked (GlcNAc...) asparagine glycan. Asn-285, Asn-311, and Asn-325 each carry an N-linked (GlcNAc...) asparagine glycan. His-584 is a Zn(2+) binding site. Glu-585 is a catalytic residue. His-588 is a binding site for Zn(2+). Asn-628 carries an N-linked (GlcNAc...) asparagine glycan. Position 647 (Glu-647) interacts with Zn(2+). Asp-651 serves as the catalytic Proton donor.

Belongs to the peptidase M13 family. It depends on Zn(2+) as a cofactor. In terms of processing, myristoylation is a determinant of membrane targeting. Post-translationally, glycosylation at Asn-628 is necessary both for surface expression and neutral endopeptidase activity.

It localises to the cell membrane. The enzyme catalyses Preferential cleavage of polypeptides between hydrophobic residues, particularly with Phe or Tyr at P1'.. The catalysed reaction is substance P + H2O = substance P(1-9) + L-Leu-L-Met-NH2. It carries out the reaction substance P + H2O = substance P(1-7) + L-Phe-Gly-L-Leu-L-Met-NH2. It catalyses the reaction neurotensin + H2O = neurotensin(1-11) + L-isoleucyl-L-leucine. The enzyme catalyses neurotensin + H2O = neurotensin(1-10) + L-tyrosyl-L-isoleucyl-L-leucine. Inhibited by mixanpril, an orally-active drug used for the treatment of hypertension. Its function is as follows. Thermolysin-like specificity, but is almost confined on acting on polypeptides of up to 30 amino acids. Biologically important in the destruction of opioid peptides such as Met- and Leu-enkephalins by cleavage of a Gly-Phe bond. Catalyzes cleavage of bradykinin, substance P and neurotensin peptides. Able to cleave angiotensin-1, angiotensin-2 and angiotensin 1-9. Involved in the degradation of atrial natriuretic factor (ANF) and brain natriuretic factor (BNP(1-32)). Displays UV-inducible elastase activity toward skin preelastic and elastic fibers. This Oryctolagus cuniculus (Rabbit) protein is Neprilysin (MME).